The sequence spans 245 residues: tRNA pseudouridine synthase A 2 (245 aa).

The active-site Nucleophile is Asp53. Residue Tyr111 coordinates substrate.

This sequence belongs to the tRNA pseudouridine synthase TruA family. Homodimer.

The catalysed reaction is uridine(38/39/40) in tRNA = pseudouridine(38/39/40) in tRNA. Functionally, formation of pseudouridine at positions 38, 39 and 40 in the anticodon stem and loop of transfer RNAs. The chain is tRNA pseudouridine synthase A 2 from Bacillus cereus (strain ATCC 14579 / DSM 31 / CCUG 7414 / JCM 2152 / NBRC 15305 / NCIMB 9373 / NCTC 2599 / NRRL B-3711).